Here is a 93-residue protein sequence, read N- to C-terminus: Small ribosomal subunit protein uS19 (93 aa).

Belongs to the universal ribosomal protein uS19 family.

Protein S19 forms a complex with S13 that binds strongly to the 16S ribosomal RNA. This chain is Small ribosomal subunit protein uS19, found in Saccharopolyspora erythraea (strain ATCC 11635 / DSM 40517 / JCM 4748 / NBRC 13426 / NCIMB 8594 / NRRL 2338).